The sequence spans 419 residues: MFSTSDGILTVEGVKVTEIVRETGTPVYVTSRALLERNLEAYKKAFSNEGLLYAVKANNNLALMRIIASHGFGADVFSDGELYLASLAGFRKDMVLFNGNSKSRKEIEMGVTAGVKFSVDSLDELRTISKIAKEVGKEVEIAFRVNPDVDPKTHPKIATGLRESKFGIPHEMVREAYEMALKLDGVVPVGIHCHIGSQILDLSPFVHALNKVMDIAVDIEKLGVELSFVDMGGGLGIDYEGKGAPTPKDLASAILPEFEGRKADLTSDPQLWLEPGRSIVGNTTVLITRVNAVKKGYKNFVAVDAGFNVLIRPAMYGSYHRVAVANKMDAEPEEVYTVVGPICESGDVLARDRKLPKVEVGDLIAVFDAGAYGFVMSSQYNGRPRCAEVLVSGDRWDVIREKESYGDLIEKQRLPEWLL.

K56 carries the N6-(pyridoxal phosphate)lysine modification. Pyridoxal 5'-phosphate is bound by residues G234 and E274–R277. Substrate-binding residues include R277, R312, and Y316. C343 (proton donor) is an active-site residue. Positions 344 and 372 each coordinate substrate. Residue Y372 coordinates pyridoxal 5'-phosphate.

It belongs to the Orn/Lys/Arg decarboxylase class-II family. LysA subfamily. As to quaternary structure, homodimer. Requires pyridoxal 5'-phosphate as cofactor.

It carries out the reaction meso-2,6-diaminopimelate + H(+) = L-lysine + CO2. The protein operates within amino-acid biosynthesis; L-lysine biosynthesis via DAP pathway; L-lysine from DL-2,6-diaminopimelate: step 1/1. Functionally, specifically catalyzes the decarboxylation of meso-diaminopimelate (meso-DAP) to L-lysine. The polypeptide is Diaminopimelate decarboxylase (Archaeoglobus fulgidus (strain ATCC 49558 / DSM 4304 / JCM 9628 / NBRC 100126 / VC-16)).